The chain runs to 323 residues: tRNA uridine(34) hydroxylase (323 aa).

The region spanning 127–221 (QDENTVVLDA…YGQDPEVQGD (95 aa)) is the Rhodanese domain. Cys181 (cysteine persulfide intermediate) is an active-site residue.

It belongs to the TrhO family.

The catalysed reaction is uridine(34) in tRNA + AH2 + O2 = 5-hydroxyuridine(34) in tRNA + A + H2O. Catalyzes oxygen-dependent 5-hydroxyuridine (ho5U) modification at position 34 in tRNAs. This Oceanobacillus iheyensis (strain DSM 14371 / CIP 107618 / JCM 11309 / KCTC 3954 / HTE831) protein is tRNA uridine(34) hydroxylase.